Here is a 394-residue protein sequence, read N- to C-terminus: Enoyl-CoA delta isomerase 2 (394 aa).

A mitochondrion-targeting transit peptide spans 1–38 (MAMAYLAWRLARRSCPSSLQVTSFPVVQLHMNRTAMRA). In terms of domain architecture, ACB spans 39–124 (SQKDFENSMN…VSSLSPSLES (86 aa)). An N6-acetyllysine; alternate modification is found at Lys51. The residue at position 51 (Lys51) is an N6-succinyllysine; alternate. An N6-succinyllysine modification is found at Lys55. Lys62 carries the N6-acetyllysine; alternate modification. Lys62 is subject to N6-succinyllysine; alternate. 66–70 (YALYK) provides a ligand contact to an acyl-CoA. Lys70, Lys81, and Lys90 each carry N6-succinyllysine. Lys92 is subject to N6-acetyllysine; alternate. Residue Lys92 is modified to N6-succinyllysine; alternate. Residue Lys92 participates in an acyl-CoA binding. Ser101 carries the post-translational modification Phosphoserine. Tyr111 provides a ligand contact to an acyl-CoA. The residue at position 119 (Ser119) is a Phosphoserine. An ECH-like region spans residues 151 to 322 (TKIMFNRPKK…AQGLVTEVFP (172 aa)). An N6-succinyllysine modification is found at Lys161. 198–202 (SGNDL) lines the substrate pocket. Lys289 bears the N6-succinyllysine mark. The Microbody targeting signal motif lies at 392–394 (SKL).

The protein in the C-terminal section; belongs to the enoyl-CoA hydratase/isomerase family. Abundant in heart, skeletal muscle and liver. Expressed in CD34(+) T-cells and CD34(+) bone marrow cells.

The protein resides in the mitochondrion. Its subcellular location is the peroxisome matrix. It catalyses the reaction a (3Z)-enoyl-CoA = a 4-saturated (2E)-enoyl-CoA. The catalysed reaction is (3Z)-octenoyl-CoA = (2E)-octenoyl-CoA. It carries out the reaction a (3E)-enoyl-CoA = a 4-saturated (2E)-enoyl-CoA. The enzyme catalyses (2E)-tetradecenoyl-CoA = (3Z)-tetradecenoyl-CoA. It catalyses the reaction (3E)-tetradecenoyl-CoA = (2E)-tetradecenoyl-CoA. The catalysed reaction is (3E)-octenoyl-CoA = (2E)-octenoyl-CoA. It carries out the reaction (3E)-nonenoyl-CoA = (2E)-nonenoyl-CoA. It functions in the pathway lipid metabolism; fatty acid beta-oxidation. Functionally, able to isomerize both 3-cis and 3-trans double bonds into the 2-trans form in a range of enoyl-CoA species. Has a preference for 3-trans substrates. This Homo sapiens (Human) protein is Enoyl-CoA delta isomerase 2 (ECI2).